Here is a 444-residue protein sequence, read N- to C-terminus: Glutamate-1-semialdehyde 2,1-aminomutase (444 aa).

At lysine 267 the chain carries N6-(pyridoxal phosphate)lysine.

This sequence belongs to the class-III pyridoxal-phosphate-dependent aminotransferase family. HemL subfamily. In terms of assembly, homodimer. Pyridoxal 5'-phosphate serves as cofactor.

It localises to the cytoplasm. The enzyme catalyses (S)-4-amino-5-oxopentanoate = 5-aminolevulinate. The protein operates within porphyrin-containing compound metabolism; protoporphyrin-IX biosynthesis; 5-aminolevulinate from L-glutamyl-tRNA(Glu): step 2/2. This is Glutamate-1-semialdehyde 2,1-aminomutase from Xylella fastidiosa (strain 9a5c).